Here is a 255-residue protein sequence, read N- to C-terminus: Adenosylcobinamide-GDP ribazoletransferase (255 aa).

The next 6 helical transmembrane spans lie at 43–63 (LVGT…SLFF), 64–84 (PYQV…GAFH), 113–133 (IGTY…VFLT), 141–161 (FGLM…TLIY), 195–215 (LAAI…AILF), and 234–254 (CLGG…IAVV).

This sequence belongs to the CobS family. Mg(2+) is required as a cofactor.

The protein resides in the cell inner membrane. The enzyme catalyses alpha-ribazole + adenosylcob(III)inamide-GDP = adenosylcob(III)alamin + GMP + H(+). It catalyses the reaction alpha-ribazole 5'-phosphate + adenosylcob(III)inamide-GDP = adenosylcob(III)alamin 5'-phosphate + GMP + H(+). Its pathway is cofactor biosynthesis; adenosylcobalamin biosynthesis; adenosylcobalamin from cob(II)yrinate a,c-diamide: step 7/7. In terms of biological role, joins adenosylcobinamide-GDP and alpha-ribazole to generate adenosylcobalamin (Ado-cobalamin). Also synthesizes adenosylcobalamin 5'-phosphate from adenosylcobinamide-GDP and alpha-ribazole 5'-phosphate. The polypeptide is Adenosylcobinamide-GDP ribazoletransferase (Vibrio vulnificus (strain CMCP6)).